A 116-amino-acid chain; its full sequence is Probable early E4 11 kDa protein (116 aa).

This is Probable early E4 11 kDa protein from Human adenovirus A serotype 12 (HAdV-12).